The chain runs to 279 residues: Elongation factor Ts (279 aa).

The tract at residues Thr80 to Val83 is involved in Mg(2+) ion dislocation from EF-Tu.

It belongs to the EF-Ts family.

The protein localises to the cytoplasm. Its function is as follows. Associates with the EF-Tu.GDP complex and induces the exchange of GDP to GTP. It remains bound to the aminoacyl-tRNA.EF-Tu.GTP complex up to the GTP hydrolysis stage on the ribosome. The chain is Elongation factor Ts from Borreliella afzelii (strain PKo) (Borrelia afzelii).